The primary structure comprises 352 residues: Vacuolar protein sorting-associated protein 37C (352 aa).

S29 is modified (phosphoserine). Residues 78–167 enclose the VPS37 C-terminal domain; sequence VERCQEQKAK…RRPRALPELA (90 aa). Positions 162–352 are disordered; that stretch reads ALPELAGDVP…HPPGPAWPRY (191 aa). 3 stretches are compositionally biased toward pro residues: residues 173 to 185, 202 to 213, and 319 to 336; these read KRPP…PQAT, YPLPYSPSPGLP, and PGQP…PPGT.

It belongs to the VPS37 family. In terms of assembly, component of the ESCRT-I complex (endosomal sorting complex required for transport I) which consists of TSG101, VPS28, a VPS37 protein (VPS37A to -D) and MVB12A or MVB12B in a 1:1:1:1 stoichiometry. Interacts with TSG101, VPS28, MVB12A and MVB12B. Component of the ESCRT-I complex (endosomal sorting complex required for transport I) which consists of TSG101, VPS28, a VPS37 protein (VPS37A to -D) and UBAP1 in a 1:1:1:1 stoichiometry. Interacts with HGS and STAM2. Interacts with CEP55. In terms of processing, phosphorylated by TBK1.

It is found in the late endosome membrane. Functionally, component of the ESCRT-I complex, a regulator of vesicular trafficking process. Required for the sorting of endocytic ubiquitinated cargos into multivesicular bodies. May be involved in cell growth and differentiation. The sequence is that of Vacuolar protein sorting-associated protein 37C (Vps37c) from Mus musculus (Mouse).